The sequence spans 480 residues: Vacuolar amino acid transporter 2 (480 aa).

The tract at residues 21–48 (LTNFPFPGTTDNDSDDGSQGQNSLNIIT) is disordered. Residues 37-46 (GSQGQNSLNI) are compositionally biased toward polar residues. The next 9 helical transmembrane spans lie at 72 to 92 (AFMN…PFAI), 95 to 115 (AGIL…DWTL), 145 to 165 (LILF…CIII), 214 to 234 (LSKA…TVVI), 263 to 283 (LSVI…FFSM), 297 to 317 (ISII…FAVF), 338 to 358 (IARL…IFVL), 394 to 414 (VFIT…FELI), and 447 to 467 (FYLC…QTII).

This sequence belongs to the amino acid/polyamine transporter 2 family.

It is found in the vacuole membrane. Functionally, probable amino acid transporter of unknown specificity. The polypeptide is Vacuolar amino acid transporter 2 (AVT2) (Saccharomyces cerevisiae (strain ATCC 204508 / S288c) (Baker's yeast)).